The following is a 477-amino-acid chain: Bifunctional protein HldE (477 aa).

Positions 1–320 are ribokinase; the sequence is MKDSLPAFEK…SLSDTHHSET (320 aa). 195 to 198 lines the ATP pocket; it reads NLHE. D264 is an active-site residue. The segment at 346–477 is cytidylyltransferase; that stretch reads MTNGCFDILH…KIIENIMANQ (132 aa).

It in the N-terminal section; belongs to the carbohydrate kinase PfkB family. This sequence in the C-terminal section; belongs to the cytidylyltransferase family. Homodimer.

The enzyme catalyses D-glycero-beta-D-manno-heptose 7-phosphate + ATP = D-glycero-beta-D-manno-heptose 1,7-bisphosphate + ADP + H(+). It carries out the reaction D-glycero-beta-D-manno-heptose 1-phosphate + ATP + H(+) = ADP-D-glycero-beta-D-manno-heptose + diphosphate. Its pathway is nucleotide-sugar biosynthesis; ADP-L-glycero-beta-D-manno-heptose biosynthesis; ADP-L-glycero-beta-D-manno-heptose from D-glycero-beta-D-manno-heptose 7-phosphate: step 1/4. It participates in nucleotide-sugar biosynthesis; ADP-L-glycero-beta-D-manno-heptose biosynthesis; ADP-L-glycero-beta-D-manno-heptose from D-glycero-beta-D-manno-heptose 7-phosphate: step 3/4. In terms of biological role, catalyzes the phosphorylation of D-glycero-D-manno-heptose 7-phosphate at the C-1 position to selectively form D-glycero-beta-D-manno-heptose-1,7-bisphosphate. Catalyzes the ADP transfer from ATP to D-glycero-beta-D-manno-heptose 1-phosphate, yielding ADP-D-glycero-beta-D-manno-heptose. The protein is Bifunctional protein HldE of Shewanella piezotolerans (strain WP3 / JCM 13877).